The sequence spans 129 residues: Ribosome-binding factor A (129 aa).

This sequence belongs to the RbfA family. In terms of assembly, monomer. Binds 30S ribosomal subunits, but not 50S ribosomal subunits or 70S ribosomes.

Its subcellular location is the cytoplasm. Functionally, one of several proteins that assist in the late maturation steps of the functional core of the 30S ribosomal subunit. Associates with free 30S ribosomal subunits (but not with 30S subunits that are part of 70S ribosomes or polysomes). Required for efficient processing of 16S rRNA. May interact with the 5'-terminal helix region of 16S rRNA. This Ectopseudomonas mendocina (strain ymp) (Pseudomonas mendocina) protein is Ribosome-binding factor A.